A 273-amino-acid polypeptide reads, in one-letter code: tRNA pseudouridine synthase B (273 aa).

Asp-38 serves as the catalytic Nucleophile.

The protein belongs to the pseudouridine synthase TruB family. Type 1 subfamily.

It carries out the reaction uridine(55) in tRNA = pseudouridine(55) in tRNA. Functionally, responsible for synthesis of pseudouridine from uracil-55 in the psi GC loop of transfer RNAs. This Sulfurimonas denitrificans (strain ATCC 33889 / DSM 1251) (Thiomicrospira denitrificans (strain ATCC 33889 / DSM 1251)) protein is tRNA pseudouridine synthase B.